A 332-amino-acid polypeptide reads, in one-letter code: uncharacterized protein (332 aa).

Belongs to the bacterial solute-binding protein 1 family. WtpA subfamily.

This is an uncharacterized protein from Methanococcus maripaludis (strain DSM 14266 / JCM 13030 / NBRC 101832 / S2 / LL).